Here is a 189-residue protein sequence, read N- to C-terminus: Cyclin-dependent kinase inhibitor 5 (189 aa).

The span at 73–93 (KQQKQQLIPSVNQCQTKNPRA) shows a compositional bias: polar residues. Residues 73-107 (KQQKQQLIPSVNQCQTKNPRASSGPAKKLEPDTTT) form a disordered region.

This sequence belongs to the CDI family. ICK/KRP subfamily. Interacts with CYCD4-1. Does not interact with CDKA-1. As to expression, expressed in flowers and at lower levels in roots and leaves.

The protein localises to the nucleus. It localises to the nucleoplasm. Its function is as follows. Inhibits CYCD2-1/CDKA-1 complex kinase activity without interaction with the complex. The protein is Cyclin-dependent kinase inhibitor 5 (KRP5) of Arabidopsis thaliana (Mouse-ear cress).